Reading from the N-terminus, the 243-residue chain is UPF0246 protein MGAS9429_Spy1799 (243 aa).

The protein belongs to the UPF0246 family.

The chain is UPF0246 protein MGAS9429_Spy1799 from Streptococcus pyogenes serotype M12 (strain MGAS9429).